Here is a 127-residue protein sequence, read N- to C-terminus: Modulator protein MzrA (127 aa).

The Cytoplasmic portion of the chain corresponds to 1–9 (MQLPRVTLR). Residues 10–32 (QMTWTTSAIVLLGITLLLWSAFR) form a helical membrane-spanning segment. Residues 33 to 127 (HQESTLAIRA…LLRDTSHRFG (95 aa)) lie on the Periplasmic side of the membrane.

It belongs to the MzrA family. Interacts with EnvZ.

The protein resides in the cell inner membrane. Modulates the activity of the EnvZ/OmpR two-component regulatory system, probably by directly modulating EnvZ enzymatic activity and increasing stability of phosphorylated OmpR. In Escherichia fergusonii (strain ATCC 35469 / DSM 13698 / CCUG 18766 / IAM 14443 / JCM 21226 / LMG 7866 / NBRC 102419 / NCTC 12128 / CDC 0568-73), this protein is Modulator protein MzrA.